Reading from the N-terminus, the 195-residue chain is ATP-dependent Clp protease proteolytic subunit (195 aa).

Catalysis depends on Ser101, which acts as the Nucleophile. Residue His126 is part of the active site.

It belongs to the peptidase S14 family. Component of the chloroplastic Clp protease core complex.

It localises to the plastid. The protein localises to the chloroplast stroma. It catalyses the reaction Hydrolysis of proteins to small peptides in the presence of ATP and magnesium. alpha-casein is the usual test substrate. In the absence of ATP, only oligopeptides shorter than five residues are hydrolyzed (such as succinyl-Leu-Tyr-|-NHMec, and Leu-Tyr-Leu-|-Tyr-Trp, in which cleavage of the -Tyr-|-Leu- and -Tyr-|-Trp bonds also occurs).. Its function is as follows. Cleaves peptides in various proteins in a process that requires ATP hydrolysis. Has a chymotrypsin-like activity. Plays a major role in the degradation of misfolded proteins. The polypeptide is ATP-dependent Clp protease proteolytic subunit (Cucumis sativus (Cucumber)).